Consider the following 514-residue polypeptide: Thymus-specific serine protease (514 aa).

A signal peptide spans 1–24; it reads MAVWLAQWLGPLLLVSLWGLLAPA. 2 N-linked (GlcNAc...) asparagine glycosylation sites follow: Asn-70 and Asn-172. Ser-185 functions as the Charge relay system in the catalytic mechanism. Asn-321 carries N-linked (GlcNAc...) asparagine glycosylation. Residues Asp-447 and His-472 each act as charge relay system in the active site.

Belongs to the peptidase S28 family. As to expression, expressed predominantly in cortical thymic epithelial cells.

It is found in the cytoplasmic vesicle. In terms of biological role, protease that may play a role in T-cell development. This chain is Thymus-specific serine protease (PRSS16), found in Homo sapiens (Human).